We begin with the raw amino-acid sequence, 164 residues long: Large ribosomal subunit protein uL10 (164 aa).

The protein belongs to the universal ribosomal protein uL10 family. In terms of assembly, part of the ribosomal stalk of the 50S ribosomal subunit. The N-terminus interacts with L11 and the large rRNA to form the base of the stalk. The C-terminus forms an elongated spine to which L12 dimers bind in a sequential fashion forming a multimeric L10(L12)X complex.

Functionally, forms part of the ribosomal stalk, playing a central role in the interaction of the ribosome with GTP-bound translation factors. This chain is Large ribosomal subunit protein uL10 (rplJ), found in Helicobacter pylori (strain J99 / ATCC 700824) (Campylobacter pylori J99).